A 166-amino-acid polypeptide reads, in one-letter code: Interferon gamma (166 aa).

An N-terminal signal peptide occupies residues Met-1 to Cys-23. The residue at position 24 (Gln-24) is a Pyrrolidone carboxylic acid. Asn-48, Asn-86, and Asn-120 each carry an N-linked (GlcNAc...) asparagine glycan.

This sequence belongs to the type II (or gamma) interferon family. As to quaternary structure, homodimer. Interacts with IFNGR1 (via extracellular domain); this interaction promotes IFNGR1 dimerization. Released primarily from activated T lymphocytes.

It is found in the secreted. Functionally, type II interferon produced by immune cells such as T-cells and NK cells that plays crucial roles in antimicrobial, antiviral, and antitumor responses by activating effector immune cells and enhancing antigen presentation. Primarily signals through the JAK-STAT pathway after interaction with its receptor IFNGR1 to affect gene regulation. Upon IFNG binding, IFNGR1 intracellular domain opens out to allow association of downstream signaling components JAK2, JAK1 and STAT1, leading to STAT1 activation, nuclear translocation and transcription of IFNG-regulated genes. Many of the induced genes are transcription factors such as IRF1 that are able to further drive regulation of a next wave of transcription. Plays a role in class I antigen presentation pathway by inducing a replacement of catalytic proteasome subunits with immunoproteasome subunits. In turn, increases the quantity, quality, and repertoire of peptides for class I MHC loading. Increases the efficiency of peptide generation also by inducing the expression of activator PA28 that associates with the proteasome and alters its proteolytic cleavage preference. Up-regulates as well MHC II complexes on the cell surface by promoting expression of several key molecules such as cathepsins B/CTSB, H/CTSH, and L/CTSL. Participates in the regulation of hematopoietic stem cells during development and under homeostatic conditions by affecting their development, quiescence, and differentiation. This is Interferon gamma (IFNG) from Saimiri sciureus (Common squirrel monkey).